The chain runs to 228 residues: Protein Thf1 (228 aa).

The stretch at 201–223 (IKRSKEVVDELSQTERRKREERA) forms a coiled coil. Positions 209–228 (DELSQTERRKREERAVSQPG) are disordered.

It belongs to the THF1 family.

Its function is as follows. May be involved in photosynthetic membrane biogenesis. This Gloeobacter violaceus (strain ATCC 29082 / PCC 7421) protein is Protein Thf1.